The sequence spans 123 residues: Ribosome-binding factor A (123 aa).

Belongs to the RbfA family. As to quaternary structure, monomer. Binds 30S ribosomal subunits, but not 50S ribosomal subunits or 70S ribosomes.

It localises to the cytoplasm. Its function is as follows. One of several proteins that assist in the late maturation steps of the functional core of the 30S ribosomal subunit. Associates with free 30S ribosomal subunits (but not with 30S subunits that are part of 70S ribosomes or polysomes). Required for efficient processing of 16S rRNA. May interact with the 5'-terminal helix region of 16S rRNA. This is Ribosome-binding factor A from Delftia acidovorans (strain DSM 14801 / SPH-1).